The sequence spans 98 residues: ATP synthase subunit alpha, chloroplastic (98 aa).

This sequence belongs to the ATPase alpha/beta chains family. As to quaternary structure, F-type ATPases have 2 components, CF(1) - the catalytic core - and CF(0) - the membrane proton channel. CF(1) has five subunits: alpha(3), beta(3), gamma(1), delta(1), epsilon(1). CF(0) has four main subunits: a, b, b' and c.

It is found in the plastid. It localises to the chloroplast thylakoid membrane. It carries out the reaction ATP + H2O + 4 H(+)(in) = ADP + phosphate + 5 H(+)(out). Functionally, produces ATP from ADP in the presence of a proton gradient across the membrane. The alpha chain is a regulatory subunit. In Populus euphratica (Euphrates poplar), this protein is ATP synthase subunit alpha, chloroplastic (atpA).